Consider the following 451-residue polypeptide: Glutamyl-tRNA reductase (451 aa).

Residues 49–52 (TCNR), serine 109, 114–116 (EQQ), and glutamine 120 contribute to the substrate site. Cysteine 50 (nucleophile) is an active-site residue. 190 to 195 (GAGAMG) lines the NADP(+) pocket.

Belongs to the glutamyl-tRNA reductase family. As to quaternary structure, homodimer.

The catalysed reaction is (S)-4-amino-5-oxopentanoate + tRNA(Glu) + NADP(+) = L-glutamyl-tRNA(Glu) + NADPH + H(+). Its pathway is porphyrin-containing compound metabolism; protoporphyrin-IX biosynthesis; 5-aminolevulinate from L-glutamyl-tRNA(Glu): step 1/2. In terms of biological role, catalyzes the NADPH-dependent reduction of glutamyl-tRNA(Glu) to glutamate 1-semialdehyde (GSA). The protein is Glutamyl-tRNA reductase of Mycolicibacterium smegmatis (strain ATCC 700084 / mc(2)155) (Mycobacterium smegmatis).